A 314-amino-acid polypeptide reads, in one-letter code: Methionyl-tRNA formyltransferase (314 aa).

109 to 112 is a (6S)-5,6,7,8-tetrahydrofolate binding site; that stretch reads SLLP.

It belongs to the Fmt family.

It carries out the reaction L-methionyl-tRNA(fMet) + (6R)-10-formyltetrahydrofolate = N-formyl-L-methionyl-tRNA(fMet) + (6S)-5,6,7,8-tetrahydrofolate + H(+). In terms of biological role, attaches a formyl group to the free amino group of methionyl-tRNA(fMet). The formyl group appears to play a dual role in the initiator identity of N-formylmethionyl-tRNA by promoting its recognition by IF2 and preventing the misappropriation of this tRNA by the elongation apparatus. The sequence is that of Methionyl-tRNA formyltransferase from Syntrophomonas wolfei subsp. wolfei (strain DSM 2245B / Goettingen).